The sequence spans 23 residues: Acidic phospholipase A2 Ts-A5 (23 aa).

Ca(2+) is required as a cofactor. In terms of processing, contains 7 disulfide bonds. Expressed by the venom gland.

The protein resides in the secreted. It catalyses the reaction a 1,2-diacyl-sn-glycero-3-phosphocholine + H2O = a 1-acyl-sn-glycero-3-phosphocholine + a fatty acid + H(+). In terms of biological role, snake venom phospholipase A2 (PLA2) that shows a moderate inhibition of ADP-induced human platelet aggregation when tested on platelet rich plasma. Exhibits high hydrolytic activities and prefers the anionic micelles (dPPC with deoxycholate) to the zwitterionic micelles (dPPC with Triton X-100). PLA2 catalyzes the calcium-dependent hydrolysis of the 2-acyl groups in 3-sn-phosphoglycerides. The polypeptide is Acidic phospholipase A2 Ts-A5 (Trimeresurus stejnegeri (Chinese green tree viper)).